We begin with the raw amino-acid sequence, 221 residues long: Thiamine-phosphate synthase (221 aa).

4-amino-2-methyl-5-(diphosphooxymethyl)pyrimidine contacts are provided by residues 46–50 and N83; that span reads QFREK. Residues D84 and D103 each contribute to the Mg(2+) site. S122 contributes to the 4-amino-2-methyl-5-(diphosphooxymethyl)pyrimidine binding site. Residue 149 to 151 participates in 2-[(2R,5Z)-2-carboxy-4-methylthiazol-5(2H)-ylidene]ethyl phosphate binding; that stretch reads TQS. A 4-amino-2-methyl-5-(diphosphooxymethyl)pyrimidine-binding site is contributed by K152. Residues G181 and 201–202 each bind 2-[(2R,5Z)-2-carboxy-4-methylthiazol-5(2H)-ylidene]ethyl phosphate; that span reads IS.

The protein belongs to the thiamine-phosphate synthase family. Requires Mg(2+) as cofactor.

It catalyses the reaction 2-[(2R,5Z)-2-carboxy-4-methylthiazol-5(2H)-ylidene]ethyl phosphate + 4-amino-2-methyl-5-(diphosphooxymethyl)pyrimidine + 2 H(+) = thiamine phosphate + CO2 + diphosphate. It carries out the reaction 2-(2-carboxy-4-methylthiazol-5-yl)ethyl phosphate + 4-amino-2-methyl-5-(diphosphooxymethyl)pyrimidine + 2 H(+) = thiamine phosphate + CO2 + diphosphate. The catalysed reaction is 4-methyl-5-(2-phosphooxyethyl)-thiazole + 4-amino-2-methyl-5-(diphosphooxymethyl)pyrimidine + H(+) = thiamine phosphate + diphosphate. The protein operates within cofactor biosynthesis; thiamine diphosphate biosynthesis; thiamine phosphate from 4-amino-2-methyl-5-diphosphomethylpyrimidine and 4-methyl-5-(2-phosphoethyl)-thiazole: step 1/1. Condenses 4-methyl-5-(beta-hydroxyethyl)thiazole monophosphate (THZ-P) and 2-methyl-4-amino-5-hydroxymethyl pyrimidine pyrophosphate (HMP-PP) to form thiamine monophosphate (TMP). In Actinobacillus succinogenes (strain ATCC 55618 / DSM 22257 / CCUG 43843 / 130Z), this protein is Thiamine-phosphate synthase.